The primary structure comprises 186 residues: Large ribosomal subunit protein bL12c (186 aa).

Residues 1–11 (MASTLSTITLR) show a composition bias toward polar residues. Positions 1–24 (MASTLSTITLRSPSPSTATSTHAS) are disordered. Residues 1–53 (MASTLSTITLRSPSPSTATSTHASIPFPKKTLEFPIRTPKLQNRRATFLRPLA) constitute a chloroplast transit peptide. Residues 12 to 24 (SPSPSTATSTHAS) are compositionally biased toward low complexity.

The protein belongs to the bacterial ribosomal protein bL12 family.

The protein resides in the plastid. Its subcellular location is the chloroplast. This Nicotiana sylvestris (Wood tobacco) protein is Large ribosomal subunit protein bL12c.